A 126-amino-acid chain; its full sequence is Holo-[acyl-carrier-protein] synthase (126 aa).

Asp-8 and Glu-57 together coordinate Mg(2+).

This sequence belongs to the P-Pant transferase superfamily. AcpS family. Mg(2+) serves as cofactor.

The protein resides in the cytoplasm. The catalysed reaction is apo-[ACP] + CoA = holo-[ACP] + adenosine 3',5'-bisphosphate + H(+). Its function is as follows. Transfers the 4'-phosphopantetheine moiety from coenzyme A to a Ser of acyl-carrier-protein. The protein is Holo-[acyl-carrier-protein] synthase of Vibrio cholerae serotype O1 (strain ATCC 39541 / Classical Ogawa 395 / O395).